The following is a 336-amino-acid chain: Glucokinase (336 aa).

12-17 (ADIGGT) provides a ligand contact to ATP.

It belongs to the bacterial glucokinase family.

It is found in the cytoplasm. The enzyme catalyses D-glucose + ATP = D-glucose 6-phosphate + ADP + H(+). This Helicobacter pylori (strain P12) protein is Glucokinase.